The sequence spans 266 residues: 5'-nucleotidase SurE (266 aa).

Residues Asp-8, Asp-9, Ser-40, and Asn-98 each contribute to the a divalent metal cation site.

This sequence belongs to the SurE nucleotidase family. The cofactor is a divalent metal cation.

The protein resides in the cytoplasm. It carries out the reaction a ribonucleoside 5'-phosphate + H2O = a ribonucleoside + phosphate. Functionally, nucleotidase that shows phosphatase activity on nucleoside 5'-monophosphates. The polypeptide is 5'-nucleotidase SurE (Parasynechococcus marenigrum (strain WH8102)).